Here is a 500-residue protein sequence, read N- to C-terminus: MKLDFGSFLSDGSSILPECILISSLIIILLIDLTSEKKTYWLYFISLTSLIISITVLLFQLKEEPIFSFSGSFQTDGFNGIFRISIAFSSLLCIPLSMEYMKCTKMAITESLIFLLTATIGGMFLCGANDLIIIFITLECLSLSSYLLSGYTKKDVRSNEAAMKYLLMGGASSSILAYGFSWLYGLSGGKIQLQEIFNGLINTQMYNSTSISIVLIFIIAGIAFKLSLVPFHQWTPDVYEGAPTSVIAFFSVTSKIAGLALATRIFNTVFFSSLNEWHLILEIIAILSMILGNFIAITQTSMKRMLAYSSISQIGYFMIGVIAGDSNGYASMITYMLFYIFMNLGTFACITLFGLRTGTDNIRDYAGLYKKDPLLASFLALSLLSLGGIPPLAGFFGKLYLFWCGWKAGLYLSVSVGLFTSVISIYYYLRIVKLIVTKENEETTSYIRKYKTSSNYLVSKSPIEFSIIICVIGSTFSGIVINPVIAIVEKTISLSSFINN.

The next 13 helical transmembrane spans lie at 14 to 34 (SILP…IDLT), 41 to 61 (WLYF…LFQL), 78 to 98 (FNGI…PLSM), 116 to 136 (LTAT…IIFI), 166 to 186 (LLMG…LYGL), 211 to 231 (ISIV…LVPF), 242 to 262 (APTS…LALA), 277 to 297 (WHLI…FIAI), 305 to 325 (MLAY…IAGD), 335 to 355 (YMLF…LFGL), 376 to 396 (ASFL…AGFF), 409 to 429 (GLYL…YYYL), and 467 to 487 (IIIC…VIAI).

It belongs to the complex I subunit 2 family. In terms of assembly, NDH is composed of at least 16 different subunits, 5 of which are encoded in the nucleus.

The protein localises to the plastid. It localises to the chloroplast thylakoid membrane. It catalyses the reaction a plastoquinone + NADH + (n+1) H(+)(in) = a plastoquinol + NAD(+) + n H(+)(out). The catalysed reaction is a plastoquinone + NADPH + (n+1) H(+)(in) = a plastoquinol + NADP(+) + n H(+)(out). NDH shuttles electrons from NAD(P)H:plastoquinone, via FMN and iron-sulfur (Fe-S) centers, to quinones in the photosynthetic chain and possibly in a chloroplast respiratory chain. The immediate electron acceptor for the enzyme in this species is believed to be plastoquinone. Couples the redox reaction to proton translocation, and thus conserves the redox energy in a proton gradient. The protein is NAD(P)H-quinone oxidoreductase subunit 2 B, chloroplastic of Anthoceros angustus (Hornwort).